Consider the following 226-residue polypeptide: Elongation factor 1-delta 2 (226 aa).

The disordered stretch occupies residues 82–131 (TACSVSPTADQKAPAADEEDDDDVDLFGEETEEEKKAAEERAAAVKASGK). Residues 97-113 (ADEEDDDDVDLFGEETE) show a composition bias toward acidic residues. A compositionally biased stretch (basic and acidic residues) spans 114–124 (EEKKAAEERAA).

Belongs to the EF-1-beta/EF-1-delta family. As to quaternary structure, EF-1 is composed of 4 subunits: alpha, beta (1B-alpha=beta'), delta (1B-beta), and gamma (1B-gamma).

In terms of biological role, EF-1-beta and EF-1-beta' stimulate the exchange of GDP bound to EF-1-alpha to GTP. The polypeptide is Elongation factor 1-delta 2 (Oryza sativa subsp. japonica (Rice)).